A 705-amino-acid chain; its full sequence is MSKQRIYEYAKELNLKSKEIIDELKSMNIEVSNHMQALEDDQIKALDKKFKKEQKNDNKQSTQNNHQKSNNQNQNKGQQKDNKKNQQQNNKGNKGNKKNNRNNKKNNKNNKPQSQPAAPKEIPSKVTYQEGITVGEFADKLNVESSEIIKKLFLLGIVANINQSLNQETIELIADDYGVEVEEEVVINEEDLSIYFEDEKDDPEAIERPAVVTIMGHVDHGKTTLLDSIRHTKVTAGEAGGITQHIGAYQIENDGKKITFLDTPGHAAFTTMRARGAQVTDITILVVAADDGVMPQTIEAINHAKEAEVPIIVAVNKIDKPTSNPDRVMQELTEYGLIPEDWGGETIFVPLSALSGDGIDDLLEMIGLVAEVQELKANPKNRAVGTVIEAELDKSRGPSASLLVQNGTLNVGDAIVVGNTYGRIRAMVNDLGQRIKTAGPSTPVEITGINDVPQAGDRFVVFSDEKQARRIGESRHEASIVQQRQESKNVSLDNLFEQMKQGEMKDLNVIIKGDVQGSVEALAASLMKIDVEGVNVRIIHTAVGAINESDVTLANASNGIIIGFNVRPDSGAKRAAEAENVDMRLHRVIYNVIEEIESAMKGLLDPEFEEQVIGQAEVRQTFKVSKVGTIAGCYVTEGKITRNAGVRIIRDGIVQYEGELDTLKRFKDDAKEVAKGYECGITIENYNDLKEGDVIEAFEMVEIKR.

The interval 40 to 124 (DDQIKALDKK…QPAAPKEIPS (85 aa)) is disordered. Residues 41–58 (DQIKALDKKFKKEQKNDN) are compositionally biased toward basic and acidic residues. Residues 59–77 (KQSTQNNHQKSNNQNQNKG) are compositionally biased toward low complexity. Residues 94 to 108 (KGNKKNNRNNKKNNK) show a composition bias toward basic residues. Residues 207–376 (ERPAVVTIMG…GLVAEVQELK (170 aa)) form the tr-type G domain. The G1 stretch occupies residues 216–223 (GHVDHGKT). GTP is bound at residue 216 to 223 (GHVDHGKT). The interval 241-245 (GITQH) is G2. Positions 262-265 (DTPG) are G3. Residues 262–266 (DTPGH) and 316–319 (NKID) contribute to the GTP site. The tract at residues 316-319 (NKID) is G4. Residues 352-354 (SAL) are G5.

It belongs to the TRAFAC class translation factor GTPase superfamily. Classic translation factor GTPase family. IF-2 subfamily.

It localises to the cytoplasm. Its function is as follows. One of the essential components for the initiation of protein synthesis. Protects formylmethionyl-tRNA from spontaneous hydrolysis and promotes its binding to the 30S ribosomal subunits. Also involved in the hydrolysis of GTP during the formation of the 70S ribosomal complex. The polypeptide is Translation initiation factor IF-2 (Staphylococcus aureus (strain MRSA252)).